Here is a 70-residue protein sequence, read N- to C-terminus: Cytochrome c oxidase subunit 8B, mitochondrial (70 aa).

The N-terminal 24 residues, 1–24 (MLSLRPALRLLQAPLRCWAVPKAH), are a transit peptide targeting the mitochondrion. The Mitochondrial matrix segment spans residues 25–35 (VSAKPAETPTS). The chain crosses the membrane as a helical span at residues 36–59 (PAEQAVGLSFIFITFLGPAGWILS). Residues 60–70 (HVENYKKRPRA) lie on the Mitochondrial intermembrane side of the membrane.

It belongs to the cytochrome c oxidase VIII family. Component of the cytochrome c oxidase (complex IV, CIV), a multisubunit enzyme composed of 14 subunits. The complex is composed of a catalytic core of 3 subunits MT-CO1, MT-CO2 and MT-CO3, encoded in the mitochondrial DNA, and 11 supernumerary subunits COX4I, COX5A, COX5B, COX6A, COX6B, COX6C, COX7A, COX7B, COX7C, COX8 and NDUFA4, which are encoded in the nuclear genome. The complex exists as a monomer or a dimer and forms supercomplexes (SCs) in the inner mitochondrial membrane with NADH-ubiquinone oxidoreductase (complex I, CI) and ubiquinol-cytochrome c oxidoreductase (cytochrome b-c1 complex, complex III, CIII), resulting in different assemblies (supercomplex SCI(1)III(2)IV(1) and megacomplex MCI(2)III(2)IV(2)).

Its subcellular location is the mitochondrion inner membrane. Its pathway is energy metabolism; oxidative phosphorylation. In terms of biological role, component of the cytochrome c oxidase, the last enzyme in the mitochondrial electron transport chain which drives oxidative phosphorylation. The respiratory chain contains 3 multisubunit complexes succinate dehydrogenase (complex II, CII), ubiquinol-cytochrome c oxidoreductase (cytochrome b-c1 complex, complex III, CIII) and cytochrome c oxidase (complex IV, CIV), that cooperate to transfer electrons derived from NADH and succinate to molecular oxygen, creating an electrochemical gradient over the inner membrane that drives transmembrane transport and the ATP synthase. Cytochrome c oxidase is the component of the respiratory chain that catalyzes the reduction of oxygen to water. Electrons originating from reduced cytochrome c in the intermembrane space (IMS) are transferred via the dinuclear copper A center (CU(A)) of subunit 2 and heme A of subunit 1 to the active site in subunit 1, a binuclear center (BNC) formed by heme A3 and copper B (CU(B)). The BNC reduces molecular oxygen to 2 water molecules using 4 electrons from cytochrome c in the IMS and 4 protons from the mitochondrial matrix. This Ateles belzebuth (White-bellied spider monkey) protein is Cytochrome c oxidase subunit 8B, mitochondrial (COX8B).